Reading from the N-terminus, the 748-residue chain is Cysteine--tRNA ligase, cytoplasmic (748 aa).

The segment at 1–25 (MAGSSGQQGKGRRVQPQWSPPAGTQ) is disordered. The residue at position 2 (Ala2) is an N-acetylalanine. Phosphoserine is present on Ser19. Zn(2+) is bound at residue Cys55. Gly56 is a binding site for L-cysteine. The short motif at 57-67 (PTVYDASHMGH) is the 'HIGH' region element. Thr96 serves as a coordination point for L-cysteine. A 'KIIK' region motif is present at residues 101–104 (KIIK). Phosphoserine is present on residues Ser305 and Ser307. Residues Cys348, His373, and Glu377 each contribute to the Zn(2+) site. His373 contributes to the L-cysteine binding site. The 'KMSKS' region signature appears at 406–410 (KMSKS). Lys409 serves as a coordination point for ATP. Composition is skewed to basic and acidic residues over residues 654–679 (KRQV…EAAK) and 700–717 (KFDE…KELS). 2 disordered regions span residues 654 to 686 (KRQV…MKIP) and 700 to 721 (KFDE…KGQA). Position 746 is a phosphoserine (Ser746).

As to quaternary structure, homodimer. Zn(2+) is required as a cofactor.

The protein localises to the cytoplasm. It catalyses the reaction tRNA(Cys) + L-cysteine + ATP = L-cysteinyl-tRNA(Cys) + AMP + diphosphate. Its function is as follows. Catalyzes the ATP-dependent ligation of cysteine to tRNA(Cys). In Macaca fascicularis (Crab-eating macaque), this protein is Cysteine--tRNA ligase, cytoplasmic (CARS1).